Consider the following 279-residue polypeptide: Large ribosomal subunit protein uL2 (279 aa).

Positions 224–279 (AMNAVDHPMGGGRGHSKGGNIPRSPWNQPSRGLKTRPKKSWDWMIVSDRRKNKAGK) are disordered.

It belongs to the universal ribosomal protein uL2 family. Part of the 50S ribosomal subunit. Forms a bridge to the 30S subunit in the 70S ribosome.

Its function is as follows. One of the primary rRNA binding proteins. Required for association of the 30S and 50S subunits to form the 70S ribosome, for tRNA binding and peptide bond formation. It has been suggested to have peptidyltransferase activity; this is somewhat controversial. Makes several contacts with the 16S rRNA in the 70S ribosome. This is Large ribosomal subunit protein uL2 from Elusimicrobium minutum (strain Pei191).